Here is a 930-residue protein sequence, read N- to C-terminus: Isoleucine--tRNA ligase (930 aa).

A 'HIGH' region motif is present at residues P57–H67. Residue E554 participates in L-isoleucyl-5'-AMP binding. The short motif at K595–S599 is the 'KMSKS' region element. Residue K598 coordinates ATP. Zn(2+) contacts are provided by C888, C891, C908, and C911.

Belongs to the class-I aminoacyl-tRNA synthetase family. IleS type 1 subfamily. Monomer. It depends on Zn(2+) as a cofactor.

Its subcellular location is the cytoplasm. The catalysed reaction is tRNA(Ile) + L-isoleucine + ATP = L-isoleucyl-tRNA(Ile) + AMP + diphosphate. Catalyzes the attachment of isoleucine to tRNA(Ile). As IleRS can inadvertently accommodate and process structurally similar amino acids such as valine, to avoid such errors it has two additional distinct tRNA(Ile)-dependent editing activities. One activity is designated as 'pretransfer' editing and involves the hydrolysis of activated Val-AMP. The other activity is designated 'posttransfer' editing and involves deacylation of mischarged Val-tRNA(Ile). The protein is Isoleucine--tRNA ligase of Streptococcus pneumoniae (strain Hungary19A-6).